A 182-amino-acid chain; its full sequence is N-alpha-acetyltransferase daf-31 (182 aa).

The N-acetyltransferase domain maps to 1–152 (MNIRCARVDD…DAYAMRRDLA (152 aa)). The tract at residues 162–182 (PADREAYTTAKTTDDKKKNRS) is disordered.

Belongs to the acetyltransferase family. ARD1 subfamily. As to quaternary structure, component of the N-terminal acetyltransferase A (NatA) complex. Expressed in head and tail hypodermal cells, hypodermal seam cells, pharynx, intestine and head and tail neurons.

It catalyses the reaction N-terminal glycyl-[protein] + acetyl-CoA = N-terminal N(alpha)-acetylglycyl-[protein] + CoA + H(+). The catalysed reaction is N-terminal L-alanyl-[protein] + acetyl-CoA = N-terminal N(alpha)-acetyl-L-alanyl-[protein] + CoA + H(+). The enzyme catalyses N-terminal L-seryl-[protein] + acetyl-CoA = N-terminal N(alpha)-acetyl-L-seryl-[protein] + CoA + H(+). It carries out the reaction N-terminal L-valyl-[protein] + acetyl-CoA = N-terminal N(alpha)-acetyl-L-valyl-[protein] + CoA + H(+). It catalyses the reaction N-terminal L-cysteinyl-[protein] + acetyl-CoA = N-terminal N(alpha)-acetyl-L-cysteinyl-[protein] + CoA + H(+). The catalysed reaction is N-terminal L-threonyl-[protein] + acetyl-CoA = N-terminal N(alpha)-acetyl-L-threonyl-[protein] + CoA + H(+). Catalytic subunit of the N-terminal acetyltransferase A (NatA) complex which displays alpha (N-terminal) acetyltransferase activity. Plays a role in regulating larval development, metabolism and longevity. Functions downstream or alongside daf-3, daf-12 and daf-16 in the dauer formation pathway. Functions upstream of daf-15 to enable animal development. This Caenorhabditis elegans protein is N-alpha-acetyltransferase daf-31.